A 154-amino-acid polypeptide reads, in one-letter code: Ascorbate-specific PTS system EIIA component (154 aa).

Positions 6-150 constitute a PTS EIIA type-2 domain; the sequence is SLAVNKSIRL…QEVLDLIDRT (145 aa). The active-site Tele-phosphohistidine intermediate is H68. H68 carries the post-translational modification Phosphohistidine.

Its subcellular location is the cytoplasm. In terms of biological role, the phosphoenolpyruvate-dependent sugar phosphotransferase system (sugar PTS), a major carbohydrate active transport system, catalyzes the phosphorylation of incoming sugar substrates concomitantly with their translocation across the cell membrane. The enzyme II UlaABC PTS system is involved in ascorbate transport. The protein is Ascorbate-specific PTS system EIIA component (ulaC) of Shigella dysenteriae serotype 1 (strain Sd197).